A 62-amino-acid polypeptide reads, in one-letter code: Translational regulator CsrA (62 aa).

The protein belongs to the CsrA/RsmA family. Homodimer; the beta-strands of each monomer intercalate to form a hydrophobic core, while the alpha-helices form wings that extend away from the core.

It is found in the cytoplasm. In terms of biological role, a key translational regulator that binds mRNA to regulate translation initiation and/or mRNA stability. Mediates global changes in gene expression, shifting from rapid growth to stress survival by linking envelope stress, the stringent response and the catabolite repression systems. Usually binds in the 5'-UTR; binding at or near the Shine-Dalgarno sequence prevents ribosome-binding, repressing translation, binding elsewhere in the 5'-UTR can activate translation and/or stabilize the mRNA. Its function is antagonized by small RNA(s). This chain is Translational regulator CsrA, found in Haemophilus ducreyi (strain 35000HP / ATCC 700724).